A 463-amino-acid polypeptide reads, in one-letter code: MYGNYSHFMKFPTGFGGSPGHTGSTSMSPSVALPTGKPMDSHPSYTDTPVSAPRTLSAVGTPLNALGSPYRVITSAMGPPSGALAAPPGINLVAPPSSQLNVVNSVSSSEDIKPLPGLPGIGNMNYPSTSPGSLVKHICAICGDRSSGKHYGVYSCEGCKGFFKRTIRKDLIYTCRDNKDCLIDKRQRNRCQYCRYQKCLVMGMKREAVQEERQRSRERAESEAECASSSHEDMPVERILEAELAVEPKTESYGDMNVENSTNDPVTNICHAADKQLFTLVEWAKRIPHFSDLTLEDQVILLRAGWNELLIASFSHRSVSVQDGILLATGLHVHRSSAHSAGVGSIFDRVLTELVSKMKDMQMDKSELGCLRAIVLFNPDAKGLSNPSEVETLREKVYATLEAYTKQKYPEQPGRFAKLLLRLPALRSIGLKCLEHLFFFKLIGDTPIDSFLMEMLETPLQIT.

A modulating region spans residues 1 to 138 (MYGNYSHFMK…TSPGSLVKHI (138 aa)). Residues 16–53 (GGSPGHTGSTSMSPSVALPTGKPMDSHPSYTDTPVSAP) are disordered. 2 consecutive NR C4-type zinc fingers follow at residues 139–159 (CAIC…CEGC) and 175–199 (CRDN…YQKC). The nuclear receptor DNA-binding region spans 139–204 (CAICGDRSSG…RYQKCLVMGM (66 aa)). Positions 205–230 (KREAVQEERQRSRERAESEAECASSS) are hinge. Basic and acidic residues predominate over residues 211 to 222 (EERQRSRERAES). The disordered stretch occupies residues 211–232 (EERQRSRERAESEAECASSSHE). The region spanning 231–459 (HEDMPVERIL…SFLMEMLETP (229 aa)) is the NR LBD domain.

Belongs to the nuclear hormone receptor family. NR2 subfamily. In terms of assembly, homodimer. Heterodimer with a RAR molecule. Binds DNA preferentially as a RAR/RXR heterodimer. Interacts with RARA. Post-translationally, acetylated by EP300.

Its subcellular location is the nucleus. It localises to the cytoplasm. Functionally, receptor for retinoic acid. Retinoic acid receptors bind as heterodimers to their target response elements in response to their ligands, all-trans or 9-cis retinoic acid, and regulate gene expression in various biological processes. The RAR/RXR heterodimers bind to the retinoic acid response elements (RARE) composed of tandem 5'-AGGTCA-3' sites known as DR1-DR5. The high affinity ligand for RXRs is 9-cis retinoic acid. In Mus musculus (Mouse), this protein is Retinoic acid receptor RXR-gamma (Rxrg).